We begin with the raw amino-acid sequence, 263 residues long: Lens fiber major intrinsic protein (263 aa).

Over 1-9 the chain is Cytoplasmic; sequence MWELRSASF. Residues 10 to 29 form a helical membrane-spanning segment; that stretch reads WRAIFAEFFATLFYVFFGLG. The Extracellular portion of the chain corresponds to 30-41; sequence SSLRWAPGPLHV. Residues 42 to 59 traverse the membrane as a helical segment; sequence LQVALAFGLALATLVQTV. Topologically, residues 60-61 are cytoplasmic; sequence GH. An intramembrane region (discontinuously helical) is located at residues 62 to 77; it reads ISGAHVNPAVTFAFLV. The short motif at 68-70 is the NPA 1 element; the sequence is NPA. Over 78–82 the chain is Cytoplasmic; that stretch reads GSQMS. Residues 83 to 106 traverse the membrane as a helical segment; the sequence is LLRAFCYIAAQLLGAVAGAAVLYS. Topologically, residues 107–127 are extracellular; the sequence is VTPPAVRGNLALNTLHAGVSV. A helical membrane pass occupies residues 128–148; it reads GQATTVEIFLTLQFVLCIFAT. At 149 to 156 the chain is on the cytoplasmic side; it reads YDERRNGR. Residues 157 to 175 form a helical membrane-spanning segment; sequence MGSVALAVGFSLTLGHLFG. Topologically, residues 176–178 are extracellular; that stretch reads MYY. Residues 179–193 constitute an intramembrane region (discontinuously helical); that stretch reads TGAGMNPARSFAPAI. An NPA 2 motif is present at residues 184–186; it reads NPA. Over 194-200 the chain is Extracellular; the sequence is LTRNFSN. A helical transmembrane segment spans residues 201 to 222; the sequence is HWVYWVGPIIGGGLGSLLYDFL. The Cytoplasmic portion of the chain corresponds to 223 to 263; that stretch reads LFPRLKSVSERLSILKGARPSDSNGQPEGTGEPVELKTQAL. The segment at 227-237 is interaction with CALM; sequence LKSVSERLSIL. Phosphoserine is present on residues Ser-235, Ser-243, and Ser-245. A disordered region spans residues 240-263; it reads ARPSDSNGQPEGTGEPVELKTQAL. Asn-246 carries the deamidated asparagine modification.

The protein belongs to the MIP/aquaporin (TC 1.A.8) family. As to quaternary structure, homotetramer; each monomer provides an independent water pore. Two homotetramers on opposing membranes can dimerize, forming a cell-cell junction. Interacts with CALM; the calcium-calmodulin/CALM complex interacts with the cytoplasmic domains of two aquaporins, leading to channel closure. Interacts with BFSP1 (via C-terminus); prevents calcium-dependent inhibition of the water channel activity. In terms of processing, subject to partial proteolytic cleavage in the eye lens core. Partial proteolysis promotes interactions between tetramers from adjoining membranes. Post-translationally, fatty acylated at Met-1 and Lys-238. The acyl modifications, in decreasing order of ion abundance, are: oleoyl (C18:1) &gt; palmitoyl (C16:0) &gt; stearoyl (C18:0) &gt; eicosenoyl (C20:1) &gt; dihomo-gamma-linolenoyl (C20:3) &gt; palmitoleoyl (C16:1) &gt; eicosadienoyl (C20:2).

The protein resides in the cell membrane. The protein localises to the cell junction. It carries out the reaction H2O(in) = H2O(out). The water channel activity is inhibited by calcium through calmodulin/CALM. Functionally, aquaporins form homotetrameric transmembrane channels, with each monomer independently mediating water transport across the plasma membrane along its osmotic gradient. Specifically expressed in lens fiber cells, this aquaporin is crucial for maintaining lens water homeostasis and transparency. Beyond water permeability, it also acts as a cell-to-cell adhesion molecule, forming thin junctions between lens fiber cells that are essential for maintaining the ordered structure and transparency of the lens. This is Lens fiber major intrinsic protein from Rattus norvegicus (Rat).